The primary structure comprises 312 residues: DDRGK domain-containing protein 1 (312 aa).

Over 1–2 the chain is Lumenal; the sequence is ME. The chain crosses the membrane as a helical span at residues 3–23; it reads LIILVGIAIALLVVIITLYLL. Residues 24 to 312 lie on the Cytoplasmic side of the membrane; that stretch reads QKKNAAPETK…ISAGGEEASS (289 aa). The segment at 30 to 163 is disordered; that stretch reads PETKPAAAPQ…KQQEDLEAEV (134 aa). Low complexity predominate over residues 52–85; that stretch reads RRAQIARNQRNRLRQNAPAAPAGQVAPAAGAPAA. Over residues 90-99 the composition is skewed to acidic residues; sequence DHEDEGQVDA. Residues 110-163 show a composition bias toward basic and acidic residues; that stretch reads LDEKMGAKKRAKMEAKEQKRLQREQELHDREQRKVKEAKEEAERKQQEDLEAEV.

This sequence belongs to the DDRGK1 family. In terms of assembly, interacts with Atg9; the interaction is transient.

It is found in the endoplasmic reticulum membrane. Its function is as follows. Substrate adapter for ufmylation, the covalent attachment of the ubiquitin-like modifier UFM1 to substrate proteins. Required for ufmylation of Atg9; protects the nervous system during aging, possibly by stabilizing Atg9 and supporting its function. This Drosophila erecta (Fruit fly) protein is DDRGK domain-containing protein 1.